Reading from the N-terminus, the 358-residue chain is Vascular endothelial growth factor D (358 aa).

Residues 1 to 21 (MYGEWGMGNILMMFHVYLVQG) form the signal peptide. The propeptide occupies 22 to 93 (FRSEHGPVKD…SRSASHRSTR (72 aa)). 3 disulfides stabilise this stretch: Cys116–Cys158, Cys147–Cys194, and Cys151–Cys196. N-linked (GlcNAc...) asparagine glycans are attached at residues Asn160 and Asn190. Residues 211-358 (SIQTPEEDEC…AQGLYSQENP (148 aa)) constitute a propeptide that is removed on maturation. The stretch at 227-242 (CPIDMLWDNTKCKCVL) is one 1; approximate repeat. The tract at residues 227 to 323 (CPIDMLWDNT…PDTCSCEDRC (97 aa)) is 4 X 16 AA repeats of C-X(10)-C-X-C-X(1,3)-C. Repeat copies occupy residues 263 to 278 (CGPH…ECVC), 282 to 298 (CPGD…CFEC), and 306 to 323 (CQKH…EDRC). A glycan (N-linked (GlcNAc...) asparagine) is linked at Asn292.

The protein belongs to the PDGF/VEGF growth factor family. In terms of assembly, homodimer; non-covalent and antiparallel. In terms of processing, undergoes a complex proteolytic maturation which generates a variety of processed secreted forms with increased activity toward VEGFR-3 and VEGFR-2. VEGF-D first form an antiparallel homodimer linked by disulfide bonds before secretion. The fully processed VEGF-D is composed mostly of two VEGF homology domains (VHDs) bound by non-covalent interactions. Highly expressed in fetal and adult lung.

The protein localises to the secreted. Growth factor active in angiogenesis, lymphangiogenesis and endothelial cell growth, stimulating their proliferation and migration and also has effects on the permeability of blood vessels. May function in the formation of the venous and lymphatic vascular systems during embryogenesis, and also in the maintenance of differentiated lymphatic endothelium in adults. Binds and activates VEGFR-3 (Flt4) receptor. The sequence is that of Vascular endothelial growth factor D from Mus musculus (Mouse).